The sequence spans 222 residues: Eukaryotic translation initiation factor 3 subunit K (222 aa).

The 163-residue stretch at 46-208 (YDLEANLAVL…KIKTKNITEK (163 aa)) folds into the PCI domain.

The protein belongs to the eIF-3 subunit K family. In terms of assembly, component of the eukaryotic translation initiation factor 3 (eIF-3) complex. The eIF-3 complex interacts with pix.

It is found in the cytoplasm. Functionally, component of the eukaryotic translation initiation factor 3 (eIF-3) complex, which is involved in protein synthesis of a specialized repertoire of mRNAs and, together with other initiation factors, stimulates binding of mRNA and methionyl-tRNAi to the 40S ribosome. The eIF-3 complex specifically targets and initiates translation of a subset of mRNAs involved in cell proliferation. This chain is Eukaryotic translation initiation factor 3 subunit K, found in Drosophila virilis (Fruit fly).